The following is a 275-amino-acid chain: UDP-Gal:alpha-D-GlcNAc-diphosphoundecaprenol beta-1,3-galactosyltransferase (275 aa).

This sequence belongs to the glycosyltransferase 2 family. Mn(2+) serves as cofactor.

The protein localises to the cell inner membrane. It catalyses the reaction N-acetyl-alpha-D-glucosaminyl-di-trans,octa-cis-undecaprenyl diphosphate + UDP-alpha-D-galactose = beta-D-Gal-(1-&gt;3)-alpha-D-GlcNAc-di-trans,octa-cis-undecaprenyl diphosphate + UDP + H(+). It functions in the pathway bacterial outer membrane biogenesis; LPS O-antigen biosynthesis. Functionally, catalyzes the addition of Gal, the second sugar moiety of the O7-antigen repeating unit, to GlcNAc-pyrophosphate-undecaprenol. The sequence is that of UDP-Gal:alpha-D-GlcNAc-diphosphoundecaprenol beta-1,3-galactosyltransferase (wbbD) from Escherichia coli.